The sequence spans 159 residues: Vesicle transport protein SFT2A (159 aa).

Residues 1-36 are Cytoplasmic-facing; sequence MEKLRRVLSGQDDEEQGLTAQVLDASSLSFNTRLKW. Phosphoserine is present on S9. A helical transmembrane segment spans residues 37–57; that stretch reads FVICFVAGIFFSFLGTGLLWL. The Lumenal segment spans residues 58–62; it reads PNGMK. Residues 63-83 traverse the membrane as a helical segment; that stretch reads LFAVFYTLGNLAALASTCFLM. The Cytoplasmic portion of the chain corresponds to 84–97; the sequence is GPVKQLKKMFETTR. Residues 98–118 form a helical membrane-spanning segment; sequence LLATIIMLLCLVFTLCAALWW. At 119–122 the chain is on the lumenal side; the sequence is RKKG. Residues 123–143 traverse the membrane as a helical segment; sequence LALLFCILQFLSMTWYSLSYI. Residues 144–159 lie on the Cytoplasmic side of the membrane; the sequence is PYARDAVLKCCSSLLG.

The protein belongs to the SFT2 family.

It is found in the membrane. Functionally, may be involved in fusion of retrograde transport vesicles derived from an endocytic compartment with the Golgi complex. In Mus musculus (Mouse), this protein is Vesicle transport protein SFT2A.